The sequence spans 140 residues: Putative nickel-responsive regulator 2 (140 aa).

The Ni(2+) site is built by His-77, His-88, His-90, and Cys-96.

It belongs to the transcriptional regulatory CopG/NikR family. Ni(2+) serves as cofactor.

Its function is as follows. Transcriptional regulator. This chain is Putative nickel-responsive regulator 2, found in Methanothermobacter thermautotrophicus (strain ATCC 29096 / DSM 1053 / JCM 10044 / NBRC 100330 / Delta H) (Methanobacterium thermoautotrophicum).